The sequence spans 435 residues: CBL-interacting protein kinase 28 (435 aa).

The Protein kinase domain maps to 11-265; it reads YVIGRQLGQG…ISRIKRSAWY (255 aa). Residues 17 to 25 and Lys-40 contribute to the ATP site; that span reads LGQGTFGKV. The active-site Proton acceptor is Asp-133. The tract at residues 151–180 is activation loop; sequence DFGLSALAESRRQDGLLHTACGTPAYVAPE. Residues 283–329 enclose the NAF domain; the sequence is CTSEAPFSGPTICISSERNQEPPNLHNLNAFDIISLSTGFDLSGLFG. The tract at residues 334 to 363 is PPI; that stretch reads RRESLFTSRKPAAAVLVKLKELAKALNLKV.

This sequence belongs to the protein kinase superfamily. CAMK Ser/Thr protein kinase family. SNF1 subfamily. The cofactor is Mn(2+).

It catalyses the reaction L-seryl-[protein] + ATP = O-phospho-L-seryl-[protein] + ADP + H(+). The catalysed reaction is L-threonyl-[protein] + ATP = O-phospho-L-threonyl-[protein] + ADP + H(+). Functionally, CIPK serine-threonine protein kinases interact with CBL proteins. Binding of a CBL protein to the regulatory NAF domain of CIPK protein lead to the activation of the kinase in a calcium-dependent manner. The protein is CBL-interacting protein kinase 28 (CIPK28) of Oryza sativa subsp. japonica (Rice).